The primary structure comprises 540 residues: Chaperonin GroEL (540 aa).

ATP contacts are provided by residues 29 to 32, 86 to 90, G413, 476 to 478, and D492; these read TLGP, DGTTT, and NAA.

Belongs to the chaperonin (HSP60) family. As to quaternary structure, forms a cylinder of 14 subunits composed of two heptameric rings stacked back-to-back. Interacts with the co-chaperonin GroES.

It localises to the cytoplasm. It catalyses the reaction ATP + H2O + a folded polypeptide = ADP + phosphate + an unfolded polypeptide.. Functionally, together with its co-chaperonin GroES, plays an essential role in assisting protein folding. The GroEL-GroES system forms a nano-cage that allows encapsulation of the non-native substrate proteins and provides a physical environment optimized to promote and accelerate protein folding. The sequence is that of Chaperonin GroEL from Streptococcus pneumoniae (strain ATCC 700669 / Spain 23F-1).